We begin with the raw amino-acid sequence, 260 residues long: Cytochrome c oxidase subunit 3 (260 aa).

Helical transmembrane passes span 14 to 34, 41 to 61, 81 to 101, 126 to 146, 158 to 178, 196 to 216, and 238 to 258; these read PWPL…ILWF, LLLA…RDVI, GMIL…WAFF, FLVP…VTWA, AIQG…LQAW, FFVA…FLFI, and AWYW…ICWW.

This sequence belongs to the cytochrome c oxidase subunit 3 family. Component of the cytochrome c oxidase (complex IV, CIV), a multisubunit enzyme composed of a catalytic core of 3 subunits and several supernumerary subunits. The complex exists as a monomer or a dimer and forms supercomplexes (SCs) in the inner mitochondrial membrane with ubiquinol-cytochrome c oxidoreductase (cytochrome b-c1 complex, complex III, CIII).

It is found in the mitochondrion inner membrane. It catalyses the reaction 4 Fe(II)-[cytochrome c] + O2 + 8 H(+)(in) = 4 Fe(III)-[cytochrome c] + 2 H2O + 4 H(+)(out). Functionally, component of the cytochrome c oxidase, the last enzyme in the mitochondrial electron transport chain which drives oxidative phosphorylation. The respiratory chain contains 3 multisubunit complexes succinate dehydrogenase (complex II, CII), ubiquinol-cytochrome c oxidoreductase (cytochrome b-c1 complex, complex III, CIII) and cytochrome c oxidase (complex IV, CIV), that cooperate to transfer electrons derived from NADH and succinate to molecular oxygen, creating an electrochemical gradient over the inner membrane that drives transmembrane transport and the ATP synthase. Cytochrome c oxidase is the component of the respiratory chain that catalyzes the reduction of oxygen to water. Electrons originating from reduced cytochrome c in the intermembrane space (IMS) are transferred via the dinuclear copper A center (CU(A)) of subunit 2 and heme A of subunit 1 to the active site in subunit 1, a binuclear center (BNC) formed by heme A3 and copper B (CU(B)). The BNC reduces molecular oxygen to 2 water molecules using 4 electrons from cytochrome c in the IMS and 4 protons from the mitochondrial matrix. The chain is Cytochrome c oxidase subunit 3 (COIII) from Patiria pectinifera (Starfish).